Reading from the N-terminus, the 438-residue chain is Glycosyl hydrolase family 109 protein (438 aa).

A signal peptide (tat-type signal) is located at residues 1–33; sequence MDKTSRRDLLKLASLAGIGAGLARSQGSSKSMA. NAD(+) contacts are provided by residues 52-53, Asp-74, 125-128, 145-146, and Asn-174; these read GR, WVWH, and EV. Residues Tyr-203, Arg-221, 233 to 236, and Tyr-315 each bind substrate; that span reads YPTH. Tyr-233 contributes to the NAD(+) binding site. The interval 408 to 438 is disordered; that stretch reads GPLSEASVANGSAPQKFPDFTRGKWQTRQPV.

The protein belongs to the Gfo/Idh/MocA family. Glycosyl hydrolase 109 subfamily. It depends on NAD(+) as a cofactor. Predicted to be exported by the Tat system. The position of the signal peptide cleavage has not been experimentally proven.

Glycosidase. The polypeptide is Glycosyl hydrolase family 109 protein (Solibacter usitatus (strain Ellin6076)).